The sequence spans 544 residues: Flagellar hook-associated protein 1 (544 aa).

This sequence belongs to the flagella basal body rod proteins family.

The protein localises to the secreted. The protein resides in the bacterial flagellum. This is Flagellar hook-associated protein 1 (flgK) from Buchnera aphidicola subsp. Schizaphis graminum (strain Sg).